Consider the following 503-residue polypeptide: Cytochrome P450 714C1 (503 aa).

Residues 1–6 (MEKLLA) are Lumenal-facing. The chain crosses the membrane as a helical; Signal-anchor for type III membrane protein span at residues 7–27 (LIVVLVILLSLALFYLCNILW). Over 28-503 (LRAVKIRKKL…GLPLMVTKLP (476 aa)) the chain is Cytoplasmic. Cys-450 contributes to the heme binding site.

The protein belongs to the cytochrome P450 family. Heme is required as a cofactor.

Its subcellular location is the membrane. Its function is as follows. Probably not involved in gibberellin metabolism since over-expression of CYP714C1 in a heterologous system does not induce semi-dwarfism. This chain is Cytochrome P450 714C1 (CYP714C1), found in Oryza sativa subsp. japonica (Rice).